The primary structure comprises 89 residues: Dynein light chain 2, cytoplasmic (89 aa).

The protein belongs to the dynein light chain family.

It is found in the cytoplasm. The protein resides in the cytoskeleton. Functionally, acts as a non-catalytic accessory component of a dynein complex. This is Dynein light chain 2, cytoplasmic (Cdlc2) from Drosophila melanogaster (Fruit fly).